A 237-amino-acid polypeptide reads, in one-letter code: Ribitol-5-phosphate cytidylyltransferase (237 aa).

CTP-binding positions include 7–10 (LAGG) and 80–86 (GEDRNET).

Belongs to the IspD/TarI cytidylyltransferase family. TarI subfamily.

It catalyses the reaction D-ribitol 5-phosphate + CTP + H(+) = CDP-L-ribitol + diphosphate. The protein operates within cell wall biogenesis; poly(ribitol phosphate) teichoic acid biosynthesis. Catalyzes the transfer of the cytidylyl group of CTP to D-ribitol 5-phosphate. The chain is Ribitol-5-phosphate cytidylyltransferase from Listeria innocua serovar 6a (strain ATCC BAA-680 / CLIP 11262).